Here is a 210-residue protein sequence, read N- to C-terminus: Thymidylate kinase (210 aa).

10–17 (GPEGAGKS) lines the ATP pocket.

This sequence belongs to the thymidylate kinase family.

It catalyses the reaction dTMP + ATP = dTDP + ADP. Its function is as follows. Phosphorylation of dTMP to form dTDP in both de novo and salvage pathways of dTTP synthesis. The chain is Thymidylate kinase from Pseudomonas syringae pv. syringae (strain B728a).